Consider the following 319-residue polypeptide: Exopolyphosphatase 2 (319 aa).

The protein belongs to the GppA/Ppx family. In terms of assembly, homodimer.

It carries out the reaction [phosphate](n) + H2O = [phosphate](n-1) + phosphate + H(+). Its activity is regulated as follows. Exopolyphosphatase activity is inhibited by ppGpp alarmones produced during the bacterial stringent response. Functionally, degradation of inorganic polyphosphates (polyP). Releases orthophosphate processively from the ends of the polyP chain. Prefers long-chain length polyphosphates as substrates. The chain is Exopolyphosphatase 2 from Mycobacterium tuberculosis (strain CDC 1551 / Oshkosh).